A 673-amino-acid polypeptide reads, in one-letter code: DNA mismatch repair protein MutL (673 aa).

It belongs to the DNA mismatch repair MutL/HexB family.

Its function is as follows. This protein is involved in the repair of mismatches in DNA. It is required for dam-dependent methyl-directed DNA mismatch repair. May act as a 'molecular matchmaker', a protein that promotes the formation of a stable complex between two or more DNA-binding proteins in an ATP-dependent manner without itself being part of a final effector complex. In Ehrlichia chaffeensis (strain ATCC CRL-10679 / Arkansas), this protein is DNA mismatch repair protein MutL.